The following is a 446-amino-acid chain: Probable D-serine dehydratase (446 aa).

At Lys-116 the chain carries N6-(pyridoxal phosphate)lysine.

Belongs to the serine/threonine dehydratase family. DsdA subfamily. Pyridoxal 5'-phosphate is required as a cofactor.

It carries out the reaction D-serine = pyruvate + NH4(+). The chain is Probable D-serine dehydratase from Bacillus cereus (strain ZK / E33L).